Consider the following 196-residue polypeptide: DnaA initiator-associating protein DiaA (196 aa).

Residues 34 to 196 (LVQSLLNGNK…DNTLFPHQDD (163 aa)) form the SIS domain.

This sequence belongs to the SIS family. DiaA subfamily. As to quaternary structure, homotetramer; dimer of dimers.

Required for the timely initiation of chromosomal replication via direct interactions with the DnaA initiator protein. In Yersinia pseudotuberculosis serotype O:1b (strain IP 31758), this protein is DnaA initiator-associating protein DiaA.